We begin with the raw amino-acid sequence, 425 residues long: D-tagatose 6-phosphate 4-epimerase (425 aa).

This sequence belongs to the GatZ/KbaZ family.

It carries out the reaction keto-D-tagatose 6-phosphate = keto-D-fructose 6-phosphate. Its pathway is carbohydrate metabolism. Its function is as follows. Involved in galactitol and D-altritol catabolism. Catalyzes the epimerization of D-tagatose 6-phosphate to D-fructose 6-phosphate. The polypeptide is D-tagatose 6-phosphate 4-epimerase (Agrobacterium fabrum (strain C58 / ATCC 33970) (Agrobacterium tumefaciens (strain C58))).